The chain runs to 593 residues: Eukaryotic peptide chain release factor subunit 1 (593 aa).

Belongs to the eukaryotic release factor 1 family. As to quaternary structure, heterodimer of two subunits, one of which binds GTP.

It localises to the cytoplasm. Directs the termination of nascent peptide synthesis (translation) in response to the termination codons UAA, UAG and UGA. The polypeptide is Eukaryotic peptide chain release factor subunit 1 (Caenorhabditis elegans).